Here is a 450-residue protein sequence, read N- to C-terminus: Serine/threonine-protein kinase SSN3 (450 aa).

The Protein kinase domain maps to 40–393 (YRIIGFISSG…AAQALQSPFF (354 aa)). ATP contacts are provided by residues 46–54 (ISSGTYGRV) and Lys71. Asp173 serves as the catalytic Proton acceptor. Disordered stretches follow at residues 307–341 (ASSH…NLEK) and 418–450 (QDDN…RQKE). Basic residues predominate over residues 310–326 (HHNHHSHHHPHHHHGHY).

This sequence belongs to the protein kinase superfamily. CMGC Ser/Thr protein kinase family. CDC2/CDKX subfamily. As to quaternary structure, component of the SRB8-11 complex, a regulatory module of the Mediator complex. Interacts with SSN8/FCC1. Mg(2+) is required as a cofactor.

The protein localises to the nucleus. It carries out the reaction L-seryl-[protein] + ATP = O-phospho-L-seryl-[protein] + ADP + H(+). The catalysed reaction is L-threonyl-[protein] + ATP = O-phospho-L-threonyl-[protein] + ADP + H(+). The enzyme catalyses [DNA-directed RNA polymerase] + ATP = phospho-[DNA-directed RNA polymerase] + ADP + H(+). Component of the SRB8-11 complex. The SRB8-11 complex is a regulatory module of the Mediator complex which is itself involved in regulation of basal and activated RNA polymerase II-dependent transcription. The SRB8-11 complex may be involved in the transcriptional repression of a subset of genes regulated by Mediator. It may inhibit the association of the Mediator complex with RNA polymerase II to form the holoenzyme complex. The SRB8-11 complex phosphorylates the C-terminal domain (CTD) of the largest subunit of RNA polymerase II. Required for normal growth and secondary metabolism. The polypeptide is Serine/threonine-protein kinase SSN3 (SSN3) (Gibberella moniliformis (Maize ear and stalk rot fungus)).